Reading from the N-terminus, the 329-residue chain is Sex comb on midleg-like protein 1 (329 aa).

A phosphoserine mark is found at Ser-138 and Ser-238. Positions 138-157 are disordered; it reads SPTLPVSRRENNSPSNLPRP. The SAM domain maps to 258 to 325; sequence WSVEAVVLFL…YYIDRLKQGK (68 aa).

The protein belongs to the SCM family.

The protein resides in the nucleus. Functionally, putative Polycomb group (PcG) protein. PcG proteins act by forming multiprotein complexes, which are required to maintain the transcriptionally repressive state of homeotic genes throughout development. May be involved in spermatogenesis during sexual maturation. This is Sex comb on midleg-like protein 1 (SCML1) from Pan troglodytes (Chimpanzee).